The sequence spans 945 residues: Isoleucine--tRNA ligase (945 aa).

The short motif at 66 to 76 is the 'HIGH' region element; that stretch reads PYANGDIHLGH. E581 contacts L-isoleucyl-5'-AMP. Residues 622-626 carry the 'KMSKS' region motif; sequence KMSKS. K625 is an ATP binding site. Residues C908, C911, C928, and C931 each contribute to the Zn(2+) site.

The protein belongs to the class-I aminoacyl-tRNA synthetase family. IleS type 1 subfamily. In terms of assembly, monomer. It depends on Zn(2+) as a cofactor.

It is found in the cytoplasm. It catalyses the reaction tRNA(Ile) + L-isoleucine + ATP = L-isoleucyl-tRNA(Ile) + AMP + diphosphate. In terms of biological role, catalyzes the attachment of isoleucine to tRNA(Ile). As IleRS can inadvertently accommodate and process structurally similar amino acids such as valine, to avoid such errors it has two additional distinct tRNA(Ile)-dependent editing activities. One activity is designated as 'pretransfer' editing and involves the hydrolysis of activated Val-AMP. The other activity is designated 'posttransfer' editing and involves deacylation of mischarged Val-tRNA(Ile). The polypeptide is Isoleucine--tRNA ligase (Burkholderia ambifaria (strain ATCC BAA-244 / DSM 16087 / CCUG 44356 / LMG 19182 / AMMD) (Burkholderia cepacia (strain AMMD))).